The chain runs to 119 residues: Large ribosomal subunit protein uL14 (119 aa).

Belongs to the universal ribosomal protein uL14 family. As to quaternary structure, part of the 50S ribosomal subunit. Forms a cluster with proteins L3 and L19. In the 70S ribosome, L14 and L19 interact and together make contacts with the 16S rRNA in bridges B5 and B8.

Binds to 23S rRNA. Forms part of two intersubunit bridges in the 70S ribosome. The polypeptide is Large ribosomal subunit protein uL14 (Anaplasma phagocytophilum (strain HZ)).